The following is a 264-amino-acid chain: Myozenin-2 (264 aa).

Arg53 carries the omega-N-methylarginine modification. Residues 98–134 (ESGSQQAPFTPPNTPDPRSPPNPENIAPGYSGPLKEI) form a disordered region. Ser101 is modified (phosphoserine). Residues 106 to 120 (FTPPNTPDPRSPPNP) are compositionally biased toward pro residues. Thr107 and Thr111 each carry phosphothreonine. A Phosphoserine modification is found at Ser116.

Belongs to the myozenin family. Interacts via its C-terminus with spectrin repeats 3 and 4 of ACTN2. Interacts with ACTN1, LDB3, MYOT and PPP3CA.

It is found in the cytoplasm. Its subcellular location is the myofibril. The protein localises to the sarcomere. The protein resides in the z line. Myozenins may serve as intracellular binding proteins involved in linking Z line proteins such as alpha-actinin, gamma-filamin, TCAP/telethonin, LDB3/ZASP and localizing calcineurin signaling to the sarcomere. Plays an important role in the modulation of calcineurin signaling. May play a role in myofibrillogenesis. The polypeptide is Myozenin-2 (MYOZ2) (Bos taurus (Bovine)).